The following is a 729-amino-acid chain: Fatty acid oxidation complex subunit alpha (729 aa).

The interval 1–189 is enoyl-CoA hydratase/isomerase; that stretch reads MLYKGDTLYL…KIGLVDGVVK (189 aa). Residue D296 participates in substrate binding. Residues 311–729 form a 3-hydroxyacyl-CoA dehydrogenase region; the sequence is ETPKQAAVLG…ARPVGSLKTA (419 aa). Residues M324, D343, 400–402, K407, and S429 each bind NAD(+); that span reads VVE. H450 functions as the For 3-hydroxyacyl-CoA dehydrogenase activity in the catalytic mechanism. Residue N453 coordinates NAD(+). Residues N500 and Y660 each coordinate substrate. The tract at residues 708 to 729 is disordered; it reads RHNEPYYPPVEPARPVGSLKTA.

The protein in the N-terminal section; belongs to the enoyl-CoA hydratase/isomerase family. This sequence in the C-terminal section; belongs to the 3-hydroxyacyl-CoA dehydrogenase family. As to quaternary structure, heterotetramer of two alpha chains (FadB) and two beta chains (FadA).

The catalysed reaction is a (3S)-3-hydroxyacyl-CoA + NAD(+) = a 3-oxoacyl-CoA + NADH + H(+). The enzyme catalyses a (3S)-3-hydroxyacyl-CoA = a (2E)-enoyl-CoA + H2O. It carries out the reaction a 4-saturated-(3S)-3-hydroxyacyl-CoA = a (3E)-enoyl-CoA + H2O. It catalyses the reaction (3S)-3-hydroxybutanoyl-CoA = (3R)-3-hydroxybutanoyl-CoA. The catalysed reaction is a (3Z)-enoyl-CoA = a 4-saturated (2E)-enoyl-CoA. The enzyme catalyses a (3E)-enoyl-CoA = a 4-saturated (2E)-enoyl-CoA. It functions in the pathway lipid metabolism; fatty acid beta-oxidation. Functionally, involved in the aerobic and anaerobic degradation of long-chain fatty acids via beta-oxidation cycle. Catalyzes the formation of 3-oxoacyl-CoA from enoyl-CoA via L-3-hydroxyacyl-CoA. It can also use D-3-hydroxyacyl-CoA and cis-3-enoyl-CoA as substrate. The polypeptide is Fatty acid oxidation complex subunit alpha (Salmonella schwarzengrund (strain CVM19633)).